A 925-amino-acid chain; its full sequence is Coronin-7 (925 aa).

WD repeat units lie at residues 75–115 (CHSD…QALP), 124–163 (PEDLPVEVLQFHPTSDGILVSAAGTTVKVWDAAKQQPLTE), 166–205 (AHGDLVQSAVWSRDGALVGTACKDKQLRIFDPRTKPRASQ), and 209–253 (AHEN…SALA). The disordered stretch occupies residues 419 to 461 (VGDADASEGFSSPPSSLTSPSTPSSLGPSLSSTSGIGTSPSLR). The span at 429–460 (SSPPSSLTSPSTPSSLGPSLSSTSGIGTSPSL) shows a compositional bias: low complexity. Residues S462 and S465 each carry the phosphoserine modification. K472 participates in a covalent cross-link: Glycyl lysine isopeptide (Lys-Gly) (interchain with G-Cter in ubiquitin). WD repeat units lie at residues 542–582 (QNGA…LEEV), 592–632 (GHTE…DRLK), and 635–674 (GHQDQIFSLAWSPDGQQLATVCKDGRVRVYRPRSGPEPLQ). A Glycyl lysine isopeptide (Lys-Gly) (interchain with G-Cter in ubiquitin) cross-link involves residue K680. The WD 8 repeat unit spans residues 728-768 (DVAPSTLLPSYDPDTGLVLLTGKGDTRVFLYELLPESPFFL). The tract at residues 858–925 (QPPDMSPVSQ…FEGVDEDEWD (68 aa)) is disordered. Over residues 866 to 882 (SQAPREAPARRAPSSAQ) the composition is skewed to low complexity. Basic and acidic residues predominate over residues 884–896 (LEEKSDQQKKEEL). S915 carries the post-translational modification Phosphoserine.

The protein belongs to the WD repeat coronin family. In terms of assembly, interacts with clathrin adapter AP1 complex. This interaction takes place at Golgi membranes and not AP1-positive endosomal membranes. Interacts (when ubiquitinated at Lys-472) with EPS15. The membrane-associated form is phosphorylated on tyrosine residues. In terms of processing, ubiquitinated via 'Lys-33'-linked ubiquitin chains by the BCR(KLHL20) E3 ubiquitin ligase complex: 'Lys-33'-linked ubiquitination promotes interaction with EPS15 and facilitates actin polymerization at the trans-Golgi network, thereby facilitating post-Golgi trafficking. Deubiquitinated by ZRANB1/TRABID. Widely expressed. Expressed in the spleen, peripheral leukocytes, testes, brain, thymus and small intestine.

The protein resides in the golgi apparatus membrane. Its subcellular location is the golgi apparatus. It is found in the trans-Golgi network. It localises to the cytoplasmic vesicle. The protein localises to the cytoplasm. The protein resides in the cytosol. F-actin regulator involved in anterograde Golgi to endosome transport: upon ubiquitination via 'Lys-33'-linked ubiquitin chains by the BCR(KLHL20) E3 ubiquitin ligase complex, interacts with EPS15 and localizes to the trans-Golgi network, where it promotes actin polymerization, thereby facilitating post-Golgi trafficking. May play a role in the maintenance of the Golgi apparatus morphology. This chain is Coronin-7 (CORO7), found in Homo sapiens (Human).